The chain runs to 502 residues: MLSEMLGEIAALPMVSLLGAALIVVSVLGRRLLVSNIAWAITGQTPAKSLAKRSRLPGLPFKFPNGQGTEKFFGGRSAARRWRIQYGPIYAIWAGLKREVVLSTPEHVQAFYKDSHLHVKATDNNSGWLFAELLGSCVGVVSQGRWKRVRRPFEHPFSRPESLTRPKAFIHEARDYFAVLNPNIQELTINTSNDLKHCPFFMVASIFFGIHTTAQRDELKQLGPPREELFRHAFMGGMNRYAITKYLPGSALALLRQFQGKWEGFVKAAYNRSIQTGDGTIVPLFEAVNRGEMSMQELLQTLDESLFANLDVTAHAVSWNVIRIAHHQDIQQKVRIEIQANNNSEKSYENYVCRDDTLLAACVLETSRLHPVLPFSNPEAAEEDKIVGGYIIPQTDVIVDTHAINIDNPHWVDSNSFDPHRHLGQKDSSRRYNMWRFGFGPRQCLGKNVADIILRIILCEMLNTYELGLLEEEGITGVKLQPDSWIGLPNGVVQMTPLKLDE.

Residues 9-29 traverse the membrane as a helical segment; it reads IAALPMVSLLGAALIVVSVLG. Residues Asn124, Asn190, Asn271, and Asn342 are each glycosylated (N-linked (GlcNAc...) asparagine). Cys444 serves as a coordination point for heme.

This sequence belongs to the cytochrome P450 family. Heme is required as a cofactor.

It localises to the membrane. The protein operates within mycotoxin biosynthesis. Functionally, cytochrome P450 monooxygenase; part of the gene cluster that mediates the biosynthesis of 11'-deoxyverticillin A, one of the dimeric epipolythiodioxopiperazines (ETPs) from the verticillin family that act as mycotoxins. 11'-deoxyverticillin A is required for normal conidiation. The nonribosomal peptide synthetase verP is speculated to be responsible for condensation of amino acids to form the carbon skeleton of verticillin, whereas the cluster-specific tailoring enzymes are involved in further modifications leading to the production of 11'-deoxyverticillin A. This is Cytochrome P450 monooxygenase verC from Clonostachys rogersoniana.